A 196-amino-acid polypeptide reads, in one-letter code: Holliday junction branch migration complex subunit RuvA (196 aa).

Positions 1–65 (MIGNLSGTVD…ENTTQLYGFI (65 aa)) are domain I. The domain II stretch occupies residues 66–143 (NKEEQSCLRL…KLETNNNNFY (78 aa)). The flexible linker stretch occupies residues 144–147 (PINE). Positions 147–196 (EDAVSALINLGYEKTKVYDTIKKYKPNLDTKDIIRTALKELSNYEIDIMQ) are domain III.

It belongs to the RuvA family. In terms of assembly, homotetramer. Forms an RuvA(8)-RuvB(12)-Holliday junction (HJ) complex. HJ DNA is sandwiched between 2 RuvA tetramers; dsDNA enters through RuvA and exits via RuvB. An RuvB hexamer assembles on each DNA strand where it exits the tetramer. Each RuvB hexamer is contacted by two RuvA subunits (via domain III) on 2 adjacent RuvB subunits; this complex drives branch migration. In the full resolvosome a probable DNA-RuvA(4)-RuvB(12)-RuvC(2) complex forms which resolves the HJ.

The protein localises to the cytoplasm. Its function is as follows. The RuvA-RuvB-RuvC complex processes Holliday junction (HJ) DNA during genetic recombination and DNA repair, while the RuvA-RuvB complex plays an important role in the rescue of blocked DNA replication forks via replication fork reversal (RFR). RuvA specifically binds to HJ cruciform DNA, conferring on it an open structure. The RuvB hexamer acts as an ATP-dependent pump, pulling dsDNA into and through the RuvAB complex. HJ branch migration allows RuvC to scan DNA until it finds its consensus sequence, where it cleaves and resolves the cruciform DNA. In Wolbachia sp. subsp. Brugia malayi (strain TRS), this protein is Holliday junction branch migration complex subunit RuvA.